The primary structure comprises 200 residues: ATP-dependent Clp protease proteolytic subunit (200 aa).

The active-site Nucleophile is Ser-98. Residue His-123 is part of the active site.

Belongs to the peptidase S14 family. As to quaternary structure, fourteen ClpP subunits assemble into 2 heptameric rings which stack back to back to give a disk-like structure with a central cavity, resembling the structure of eukaryotic proteasomes.

It is found in the cytoplasm. It carries out the reaction Hydrolysis of proteins to small peptides in the presence of ATP and magnesium. alpha-casein is the usual test substrate. In the absence of ATP, only oligopeptides shorter than five residues are hydrolyzed (such as succinyl-Leu-Tyr-|-NHMec, and Leu-Tyr-Leu-|-Tyr-Trp, in which cleavage of the -Tyr-|-Leu- and -Tyr-|-Trp bonds also occurs).. Cleaves peptides in various proteins in a process that requires ATP hydrolysis. Has a chymotrypsin-like activity. Plays a major role in the degradation of misfolded proteins. This chain is ATP-dependent Clp protease proteolytic subunit, found in Deinococcus geothermalis (strain DSM 11300 / CIP 105573 / AG-3a).